The chain runs to 440 residues: Chromosome partition protein MukF (440 aa).

The interval 208-236 is leucine-zipper; it reads LSETSGTLRELQDTLDAAGDKLQANLLRI.

Belongs to the MukF family. Interacts, and probably forms a ternary complex, with MukE and MukB via its C-terminal region. The complex formation is stimulated by calcium or magnesium. It is required for an interaction between MukE and MukB.

The protein localises to the cytoplasm. It is found in the nucleoid. In terms of biological role, involved in chromosome condensation, segregation and cell cycle progression. May participate in facilitating chromosome segregation by condensation DNA from both sides of a centrally located replisome during cell division. Not required for mini-F plasmid partitioning. Probably acts via its interaction with MukB and MukE. Overexpression results in anucleate cells. It has a calcium binding activity. The sequence is that of Chromosome partition protein MukF from Klebsiella pneumoniae subsp. pneumoniae (strain ATCC 700721 / MGH 78578).